A 39-amino-acid chain; its full sequence is Photosystem II reaction center protein L (39 aa).

The helical transmembrane segment at 18-38 (SLYLGLLSVLVLGILFSSYFF) threads the bilayer.

It belongs to the PsbL family. In terms of assembly, PSII is composed of 1 copy each of membrane proteins PsbA, PsbB, PsbC, PsbD, PsbE, PsbF, PsbH, PsbI, PsbJ, PsbK, PsbL, PsbM, PsbT, PsbX, PsbY, Psb30/Ycf12, peripheral proteins PsbO, CyanoQ (PsbQ), PsbU, PsbV and a large number of cofactors. It forms dimeric complexes.

The protein resides in the cellular thylakoid membrane. Functionally, one of the components of the core complex of photosystem II (PSII). PSII is a light-driven water:plastoquinone oxidoreductase that uses light energy to abstract electrons from H(2)O, generating O(2) and a proton gradient subsequently used for ATP formation. It consists of a core antenna complex that captures photons, and an electron transfer chain that converts photonic excitation into a charge separation. This subunit is found at the monomer-monomer interface and is required for correct PSII assembly and/or dimerization. This is Photosystem II reaction center protein L from Prochlorococcus marinus subsp. pastoris (strain CCMP1986 / NIES-2087 / MED4).